The primary structure comprises 365 residues: NADH-quinone oxidoreductase subunit 8 (365 aa).

9 consecutive transmembrane segments (helical) span residues Trp-11–Met-31, Phe-80–Ile-100, Leu-120–Gly-140, Ala-157–Val-177, His-192–Ala-212, Phe-252–Leu-272, Glu-273–Ile-293, Trp-310–Leu-330, and Tyr-336–Pro-356.

It belongs to the complex I subunit 1 family. NDH-1 is composed of 15 different subunits, Nqo1 to Nqo15. The complex has a L-shaped structure, with the hydrophobic arm (subunits Nqo7, Nqo8 and Nqo10 to Nqo14) embedded in the membrane and the hydrophilic peripheral arm (subunits Nqo1 to Nqo6, Nqo9 and Nqo15) protruding into the bacterial cytoplasm. The hydrophilic domain contains all the redox centers.

It is found in the cell inner membrane. The catalysed reaction is a quinone + NADH + 5 H(+)(in) = a quinol + NAD(+) + 4 H(+)(out). In terms of biological role, NDH-1 shuttles electrons from NADH, via FMN and iron-sulfur (Fe-S) centers, to quinones in the respiratory chain. The immediate electron acceptor for the enzyme in this species is menaquinone. Couples the redox reaction to proton translocation (for every two electrons transferred, four hydrogen ions are translocated across the cytoplasmic membrane), and thus conserves the redox energy in a proton gradient required for the synthesis of ATP. The protein is NADH-quinone oxidoreductase subunit 8 (nqo8) of Thermus thermophilus (strain ATCC 27634 / DSM 579 / HB8).